A 316-amino-acid chain; its full sequence is Ribosomal RNA small subunit methyltransferase H (316 aa).

S-adenosyl-L-methionine is bound by residues 37–39 (GGH), Asp56, Phe83, Asp106, and His113. The disordered stretch occupies residues 276 to 316 (PILPSEEETKENPASRSAKLRVLRKTKSADKKYKKENSKEE). Residues 302-316 (KSADKKYKKENSKEE) show a composition bias toward basic and acidic residues.

Belongs to the methyltransferase superfamily. RsmH family.

Its subcellular location is the cytoplasm. It carries out the reaction cytidine(1402) in 16S rRNA + S-adenosyl-L-methionine = N(4)-methylcytidine(1402) in 16S rRNA + S-adenosyl-L-homocysteine + H(+). Functionally, specifically methylates the N4 position of cytidine in position 1402 (C1402) of 16S rRNA. The protein is Ribosomal RNA small subunit methyltransferase H of Leptospira borgpetersenii serovar Hardjo-bovis (strain L550).